The primary structure comprises 86 residues: Progonadoliberin-2 (86 aa).

The N-terminal stretch at 1–24 (MVSVARLVFMLGPLLCLGAQLSSS) is a signal peptide. Glutamine 25 is subject to Pyrrolidone carboxylic acid. Glycine 34 bears the Glycine amide mark.

The protein belongs to the GnRH family.

It localises to the secreted. In terms of biological role, stimulates the secretion of gonadotropins. This chain is Progonadoliberin-2 (gnrh2), found in Oncorhynchus mykiss (Rainbow trout).